A 496-amino-acid polypeptide reads, in one-letter code: Glycerol kinase (496 aa).

Position 12 (threonine 12) interacts with ADP. Residues threonine 12, threonine 13, and serine 14 each coordinate ATP. Sn-glycerol 3-phosphate is bound at residue threonine 12. Residue arginine 16 coordinates ADP. Sn-glycerol 3-phosphate contacts are provided by arginine 82, glutamate 83, and tyrosine 134. The glycerol site is built by arginine 82, glutamate 83, and tyrosine 134. Residue histidine 230 is modified to Phosphohistidine; by HPr. Position 244 (aspartate 244) interacts with sn-glycerol 3-phosphate. Glycerol is bound by residues aspartate 244 and glutamine 245. Residues threonine 266 and glycine 309 each coordinate ADP. ATP-binding residues include threonine 266, glycine 309, glutamine 313, and glycine 410. The ADP site is built by glycine 410 and asparagine 414.

It belongs to the FGGY kinase family. In terms of assembly, homotetramer and homodimer (in equilibrium). The phosphoenolpyruvate-dependent sugar phosphotransferase system (PTS), including enzyme I, and histidine-containing protein (HPr) are required for the phosphorylation, which leads to the activation of the enzyme.

It carries out the reaction glycerol + ATP = sn-glycerol 3-phosphate + ADP + H(+). It functions in the pathway polyol metabolism; glycerol degradation via glycerol kinase pathway; sn-glycerol 3-phosphate from glycerol: step 1/1. Activated by phosphorylation and inhibited by fructose 1,6-bisphosphate (FBP). Its function is as follows. Key enzyme in the regulation of glycerol uptake and metabolism. Catalyzes the phosphorylation of glycerol to yield sn-glycerol 3-phosphate. This is Glycerol kinase from Bacillus cereus (strain G9842).